Here is a 339-residue protein sequence, read N- to C-terminus: STEAP1 protein (339 aa).

Transmembrane regions (helical) follow at residues tryptophan 71 to leucine 91 and proline 119 to valine 139. The region spanning leucine 118 to glycine 265 is the Ferric oxidoreductase domain. FAD-binding residues include glutamine 140 and arginine 161. The next 2 membrane-spanning stretches (helical) occupy residues phenylalanine 164 to methionine 184 and isoleucine 218 to isoleucine 238. Position 175 (histidine 175) interacts with heme b. The FAD site is built by serine 237 and glutamine 254. Transmembrane regions (helical) follow at residues glycine 258–isoleucine 278 and phenylalanine 291–proline 311. Histidine 268 is a heme b binding site.

The protein belongs to the STEAP family. Homotrimer. FAD is required as a cofactor. Requires heme b as cofactor. In terms of tissue distribution, ubiquitously expressed. Highly expressed in prostate tumors.

It is found in the endosome membrane. The protein localises to the cell membrane. Functionally, does not function as a metalloreductase due to the absence of binding sites for the electron-donating substrate NADPH. Promotes Fe(3+) reduction when fused to the NADPH-binding domain of STEAP4. The protein is STEAP1 protein (STEAP1) of Homo sapiens (Human).